The following is a 63-amino-acid chain: Metallothionein (63 aa).

Residues 1–30 (MDPQDCTCAAGDSCSCAGSCKCKNCRCRSC) form a beta region. A divalent metal cation is bound by residues Cys-6, Cys-8, Cys-14, Cys-16, Cys-20, Cys-22, Cys-25, Cys-27, Cys-30, Cys-34, Cys-35, Cys-37, Cys-38, Cys-42, Cys-45, Cys-49, Cys-51, Cys-59, Cys-61, and Cys-62. Residues 31-63 (RKSCCSCCPAGCNNCAKGCVCKEPASSKCSCCH) form an alpha region.

Belongs to the metallothionein superfamily. Type 1 family.

Its function is as follows. Metallothioneins have a high content of cysteine residues that bind various heavy metals. This Anas platyrhynchos (Mallard) protein is Metallothionein.